The following is a 458-amino-acid chain: uncharacterized protein (458 aa).

The protein belongs to the glycerate kinase type-2 family.

This is an uncharacterized protein from Caenorhabditis elegans.